The primary structure comprises 439 residues: uncharacterized protein (439 aa).

Positions 1–22 (MWVALKRFGFLSGLLALTVLSA) are cleaved as a signal peptide. A lipid anchor (N-palmitoyl cysteine) is attached at C23. The S-diacylglycerol cysteine moiety is linked to residue C23.

It belongs to the MG067/MG068/MG395 family.

The protein localises to the cell membrane. This is an uncharacterized protein from Mycoplasma pneumoniae (strain ATCC 29342 / M129 / Subtype 1) (Mycoplasmoides pneumoniae).